Reading from the N-terminus, the 243-residue chain is DNA repair protein RecO (243 aa).

Belongs to the RecO family.

Involved in DNA repair and RecF pathway recombination. In Serratia proteamaculans (strain 568), this protein is DNA repair protein RecO.